Here is a 233-residue protein sequence, read N- to C-terminus: 7-cyano-7-deazaguanine synthase (233 aa).

7-17 lines the ATP pocket; that stretch reads LSGGLDSAVTS. 4 residues coordinate Zn(2+): Cys-195, Cys-206, Cys-209, and Cys-212.

This sequence belongs to the QueC family. Zn(2+) serves as cofactor.

The enzyme catalyses 7-carboxy-7-deazaguanine + NH4(+) + ATP = 7-cyano-7-deazaguanine + ADP + phosphate + H2O + H(+). It participates in purine metabolism; 7-cyano-7-deazaguanine biosynthesis. In terms of biological role, catalyzes the ATP-dependent conversion of 7-carboxy-7-deazaguanine (CDG) to 7-cyano-7-deazaguanine (preQ(0)). In Methanococcus maripaludis (strain C7 / ATCC BAA-1331), this protein is 7-cyano-7-deazaguanine synthase.